Reading from the N-terminus, the 154-residue chain is MYKMQLLCCIALTLALMANGAPTSSSTKNTKKQLEPLLLDLQLLLKEVKNYENADLSRMLTFKFYMPKQATELKHLQCLVEELKALEGVLNLGQSKNSDSANIKESMNNINVTVLELKGSETSFKCEYDDETVTAVEFLNKWITFCQSIYSTLT.

The signal sequence occupies residues 1 to 20 (MYKMQLLCCIALTLALMANG). Thr-23 carries an O-linked (GalNAc...) threonine glycan. Cys-78 and Cys-126 are disulfide-bonded.

The protein belongs to the IL-2 family.

It localises to the secreted. Cytokine produced by activated CD4-positive helper T-cells and to a lesser extend activated CD8-positive T-cells and natural killer (NK) cells that plays pivotal roles in the immune response and tolerance. Binds to a receptor complex composed of either the high-affinity trimeric IL-2R (IL2RA/CD25, IL2RB/CD122 and IL2RG/CD132) or the low-affinity dimeric IL-2R (IL2RB and IL2RG). Interaction with the receptor leads to oligomerization and conformation changes in the IL-2R subunits resulting in downstream signaling starting with phosphorylation of JAK1 and JAK3. In turn, JAK1 and JAK3 phosphorylate the receptor to form a docking site leading to the phosphorylation of several substrates including STAT5. This process leads to activation of several pathways including STAT, phosphoinositide-3-kinase/PI3K and mitogen-activated protein kinase/MAPK pathways. Functions as a T-cell growth factor and can increase NK-cell cytolytic activity as well. Promotes strong proliferation of activated B-cells and subsequently immunoglobulin production. Plays a pivotal role in regulating the adaptive immune system by controlling the survival and proliferation of regulatory T-cells, which are required for the maintenance of immune tolerance. Moreover, participates in the differentiation and homeostasis of effector T-cell subsets, including Th1, Th2, Th17 as well as memory CD8-positive T-cells. This is Interleukin-2 (IL2) from Sus scrofa (Pig).